A 90-amino-acid polypeptide reads, in one-letter code: Large ribosomal subunit protein eL31 (90 aa).

The protein belongs to the eukaryotic ribosomal protein eL31 family.

This is Large ribosomal subunit protein eL31 from Natronomonas pharaonis (strain ATCC 35678 / DSM 2160 / CIP 103997 / JCM 8858 / NBRC 14720 / NCIMB 2260 / Gabara) (Halobacterium pharaonis).